We begin with the raw amino-acid sequence, 466 residues long: Asparagine--tRNA ligase (466 aa).

This sequence belongs to the class-II aminoacyl-tRNA synthetase family. Homodimer.

It localises to the cytoplasm. It catalyses the reaction tRNA(Asn) + L-asparagine + ATP = L-asparaginyl-tRNA(Asn) + AMP + diphosphate + H(+). This Shewanella halifaxensis (strain HAW-EB4) protein is Asparagine--tRNA ligase.